The chain runs to 400 residues: 11-beta-hydroxysteroid dehydrogenase type 2 (400 aa).

An NAD(+)-binding site is contributed by 82-111 (TRAVLITGCDTGFGKETAKKLDAMGFTVLA). Ser-219 serves as a coordination point for substrate. The active-site Proton acceptor is Tyr-232. The interval 378–400 (PGQPGPVHDTTQDPNPSPTVSAL) is disordered. A compositionally biased stretch (polar residues) spans 389 to 400 (QDPNPSPTVSAL).

Belongs to the short-chain dehydrogenases/reductases (SDR) family. Interacts with ligand-free cytoplasmic NR3C2. As to expression, highly expressed in kidney, adrenal gland and distal colon, and at much lower levels in lung, hypothalamus, hippocampus, and midbrain.

The protein localises to the microsome. It localises to the endoplasmic reticulum. The enzyme catalyses an 11beta-hydroxysteroid + NAD(+) = an 11-oxosteroid + NADH + H(+). The catalysed reaction is corticosterone + NAD(+) = 11-dehydrocorticosterone + NADH + H(+). It catalyses the reaction 11beta,17beta-dihydroxyandrost-4-ene-3-one + NAD(+) = 17beta-hydroxyandrost-4-ene-3,11-dione + NADH + H(+). It carries out the reaction 11beta-hydroxyandrost-4-ene-3,17-dione + NAD(+) = androst-4-ene-3,11,17-trione + NADH + H(+). It participates in steroid metabolism. Inhibited by glycyrrhetinic acid. Induced by progesterone, through the Ihh signaling pathway. In terms of biological role, catalyzes the conversion of biologically active 11beta-hydroxyglucocorticoids (11beta-hydroxysteroid) such as corticosterone, to inactive 11-ketoglucocorticoids (11-oxosteroid) such as 11-dehydrocorticosterone, in the presence of NAD(+). Functions as a dehydrogenase (oxidase), thereby decreasing the concentration of active glucocorticoids, thus protecting the nonselective mineralocorticoid receptor from occupation by glucocorticoids. Plays an important role in maintaining glucocorticoids balance during preimplantation and protects the fetus from excessive maternal corticosterone exposure. Catalyzes the oxidation of 11beta-hydroxytestosterone (11beta,17beta-dihydroxyandrost-4-ene-3-one) to 11-ketotestosterone (17beta-hydroxyandrost-4-ene-3,11-dione), a major bioactive androgen. Catalyzes the conversion of 11beta-hydroxyandrostenedione (11beta-hydroxyandrost-4-ene-3,17-dione) to 11-ketoandrostenedione (androst-4-ene-3,11,17-trione), which can be further metabolized to 11-ketotestosterone. Converts 7-beta-25-dihydroxycholesterol to 7-oxo-25-hydroxycholesterol in vitro. 7-beta-25-dihydroxycholesterol (not 7-oxo-25-hydroxycholesterol) acts as a ligand for the G-protein-coupled receptor (GPCR) Epstein-Barr virus-induced gene 2 (EBI2) and may thereby regulate immune cell migration. The sequence is that of 11-beta-hydroxysteroid dehydrogenase type 2 (Hsd11b2) from Rattus norvegicus (Rat).